The primary structure comprises 172 residues: Lipoprotein signal peptidase (172 aa).

The next 2 helical transmembrane spans lie at 70 to 90 (ERWL…AWIW) and 94 to 114 (AKGD…NIAD). Active-site residues include Asp-123 and Asp-142. Residues 134–154 (PFLVFNVADAAITIGVLILVL) form a helical membrane-spanning segment.

Belongs to the peptidase A8 family.

The protein localises to the cell inner membrane. It catalyses the reaction Release of signal peptides from bacterial membrane prolipoproteins. Hydrolyzes -Xaa-Yaa-Zaa-|-(S,diacylglyceryl)Cys-, in which Xaa is hydrophobic (preferably Leu), and Yaa (Ala or Ser) and Zaa (Gly or Ala) have small, neutral side chains.. It participates in protein modification; lipoprotein biosynthesis (signal peptide cleavage). In terms of biological role, this protein specifically catalyzes the removal of signal peptides from prolipoproteins. The chain is Lipoprotein signal peptidase from Rhizorhabdus wittichii (strain DSM 6014 / CCUG 31198 / JCM 15750 / NBRC 105917 / EY 4224 / RW1) (Sphingomonas wittichii).